The primary structure comprises 968 residues: RNA polymerase-associated protein RapA (968 aa).

In terms of domain architecture, Helicase ATP-binding spans 164 to 334; it reads EVGQRHAPRV…FARLRLLDPD (171 aa). 177 to 184 lines the ATP pocket; sequence DEVGLGKT. A DEAH box motif is present at residues 280–283; the sequence is DEAH. A Helicase C-terminal domain is found at 490 to 664; the sequence is RVEWLLNYLI…ATPSEQEGLD (175 aa).

Belongs to the SNF2/RAD54 helicase family. RapA subfamily. In terms of assembly, interacts with the RNAP. Has a higher affinity for the core RNAP than for the holoenzyme. Its ATPase activity is stimulated by binding to RNAP.

Transcription regulator that activates transcription by stimulating RNA polymerase (RNAP) recycling in case of stress conditions such as supercoiled DNA or high salt concentrations. Probably acts by releasing the RNAP, when it is trapped or immobilized on tightly supercoiled DNA. Does not activate transcription on linear DNA. Probably not involved in DNA repair. In Yersinia enterocolitica serotype O:8 / biotype 1B (strain NCTC 13174 / 8081), this protein is RNA polymerase-associated protein RapA.